Consider the following 454-residue polypeptide: Transmembrane protease serine 3 (454 aa).

Over 1-48 (MGENDPPAVEAPFSFRSLFGLDDLKISPVAPDADAVAAQILSLLPLKF) the chain is Cytoplasmic. A helical; Signal-anchor for type II membrane protein membrane pass occupies residues 49-69 (FPIIVIGIIALILALAIGLGI). Topologically, residues 70-454 (HFDCSGKYRC…HEQMERDLKT (385 aa)) are extracellular. The LDL-receptor class A domain maps to 72–108 (DCSGKYRCRSSFKCIELIARCDGVSDCKDGEDEYRCV). 10 disulfides stabilise this stretch: Cys-73–Cys-85, Cys-79–Cys-98, Cys-92–Cys-107, Cys-129–Cys-194, Cys-142–Cys-204, Cys-207–Cys-324, Cys-242–Cys-258, Cys-338–Cys-407, Cys-370–Cys-386, and Cys-397–Cys-425. Residues 109-205 (RVGGQNAVLQ…SGHVVTLQCT (97 aa)) enclose the SRCR domain. Residues 217–449 (IVGGNMSLLS…FLDWIHEQME (233 aa)) enclose the Peptidase S1 domain. An N-linked (GlcNAc...) asparagine glycan is attached at Asn-221. Residues His-257 and Asp-304 each act as charge relay system in the active site. Ser-401 (charge relay system) is an active-site residue.

Belongs to the peptidase S1 family. Undergoes autoproteolytic activation. In terms of tissue distribution, expressed in many tissues including fetal cochlea. Isoform T is found at increased levels in some carcinomas.

Its subcellular location is the endoplasmic reticulum membrane. Its function is as follows. Probable serine protease that plays a role in hearing. Acts as a permissive factor for cochlear hair cell survival and activation at the onset of hearing and is required for saccular hair cell survival. Activates ENaC (in vitro). In Homo sapiens (Human), this protein is Transmembrane protease serine 3 (TMPRSS3).